The sequence spans 199 residues: Mediator of RNA polymerase II transcription subunit 10 (199 aa).

Belongs to the Mediator complex subunit 10 family. Component of the Mediator complex.

The protein localises to the nucleus. Component of the Mediator complex, a coactivator involved in the regulated transcription of nearly all RNA polymerase II-dependent genes. Mediator functions as a bridge to convey information from gene-specific regulatory proteins to the basal RNA polymerase II transcription machinery. Mediator is recruited to promoters by direct interactions with regulatory proteins and serves as a scaffold for the assembly of a functional preinitiation complex with RNA polymerase II and the general transcription factors. In Candida glabrata (strain ATCC 2001 / BCRC 20586 / JCM 3761 / NBRC 0622 / NRRL Y-65 / CBS 138) (Yeast), this protein is Mediator of RNA polymerase II transcription subunit 10 (NUT2).